The following is a 272-amino-acid chain: Shikimate dehydrogenase (NADP(+)) (272 aa).

Shikimate contacts are provided by residues 14-16 and T61; that span reads SKS. The active-site Proton acceptor is the K65. Residues N86 and D102 each contribute to the shikimate site. NADP(+)-binding positions include 126–130, 150–155, and M214; these read GAGGA and NRTASK. Residue Y216 participates in shikimate binding. NADP(+) is bound at residue G239.

This sequence belongs to the shikimate dehydrogenase family. Homodimer.

It catalyses the reaction shikimate + NADP(+) = 3-dehydroshikimate + NADPH + H(+). It participates in metabolic intermediate biosynthesis; chorismate biosynthesis; chorismate from D-erythrose 4-phosphate and phosphoenolpyruvate: step 4/7. Involved in the biosynthesis of the chorismate, which leads to the biosynthesis of aromatic amino acids. Catalyzes the reversible NADPH linked reduction of 3-dehydroshikimate (DHSA) to yield shikimate (SA). This is Shikimate dehydrogenase (NADP(+)) from Pseudoalteromonas atlantica (strain T6c / ATCC BAA-1087).